The following is a 175-amino-acid chain: MRLPGRHVLYALSAVTMLAACSSNGARGGIASTNMNPTNPPATAETATVSPTPAPQSARTETWINLQVGDCLADLPPADLSRITVTIVDCATAHSAEVYLRAPVAVDAAVVSMANRDCAAGFAPYTGQSVDTSPYSVAYLIDSHQDRTGADLTPSTVICLLQPANGQLLTGSARR.

A signal peptide spans 1 to 20 (MRLPGRHVLYALSAVTMLAA). The N-palmitoyl cysteine moiety is linked to residue C21. Residue C21 is the site of S-diacylglycerol cysteine attachment. Residues 31-56 (ASTNMNPTNPPATAETATVSPTPAPQ) form a disordered region. Over residues 33-48 (TNMNPTNPPATAETAT) the composition is skewed to low complexity.

The protein resides in the cell membrane. The sequence is that of Putative lipoprotein LppN (lppN) from Mycobacterium bovis (strain ATCC BAA-935 / AF2122/97).